The chain runs to 317 residues: Ribonuclease 3-like protein 2 (317 aa).

A disordered region spans residues 1–26; sequence MAPPPAMKPASRKRGPPAPDPVELPP. The segment covering 16 to 26 has biased composition (pro residues); sequence PPAPDPVELPP. Residues 37-185 form the RNase III domain; the sequence is AARVERLLRY…IAAAVYVDCK (149 aa). Mg(2+) contacts are provided by Glu74, Asp171, and Glu174. The DRBM domain occupies 211 to 274; the sequence is QPVTMLHELC…ARDATRKLAG (64 aa).

The cofactor is Mg(2+). It depends on Mn(2+) as a cofactor.

Cleaves double-stranded RNA (dsRNA). In Oryza sativa subsp. japonica (Rice), this protein is Ribonuclease 3-like protein 2.